The primary structure comprises 277 residues: 3-methyl-2-oxobutanoate hydroxymethyltransferase (277 aa).

Positions 53 and 96 each coordinate Mg(2+). Residues 53–54, aspartate 96, and lysine 126 contribute to the 3-methyl-2-oxobutanoate site; that span reads DS. Glutamate 128 lines the Mg(2+) pocket. Residue glutamate 195 is the Proton acceptor of the active site.

The protein belongs to the PanB family. In terms of assembly, homodecamer; pentamer of dimers. Mg(2+) is required as a cofactor.

The protein resides in the cytoplasm. It carries out the reaction 3-methyl-2-oxobutanoate + (6R)-5,10-methylene-5,6,7,8-tetrahydrofolate + H2O = 2-dehydropantoate + (6S)-5,6,7,8-tetrahydrofolate. It participates in cofactor biosynthesis; (R)-pantothenate biosynthesis; (R)-pantoate from 3-methyl-2-oxobutanoate: step 1/2. Its function is as follows. Catalyzes the reversible reaction in which hydroxymethyl group from 5,10-methylenetetrahydrofolate is transferred onto alpha-ketoisovalerate to form ketopantoate. This is 3-methyl-2-oxobutanoate hydroxymethyltransferase from Pelodictyon phaeoclathratiforme (strain DSM 5477 / BU-1).